The following is a 532-amino-acid chain: MRYSLRQDIAVEPVIAGWYGWSYLLPPQTLARFVHNRFNRIVESYLDDPQVHAAAVRQRRMHGGPWIHAHEHRDAIEAWYRETAPRRERLDELFEAVRRLEEDILPRHHGECLDPVYQELPAALAGRVEVFYGRDNRTADYRFVEPLMYASEYYDESWQQVRFRPVTEDAREFALTTPMLEYGPEQLLVDVPLNSPLLDAVFRGGLTGTELDDLAARFGLDGERAARFASYFEPTPAASEAPAPASSSEEDVLEYVGHACVFARHRGTTFLVDPVLSYSGYPGGAENRFTFADLPERIDHLLITHNHQDHMLFETLLRIRHRVGRVLVPKSTNASLVDPGLGGILRRLGFTDVVEVDDLETLSCGSAEVVALPFLGEHGDLRIRSKTGWLIRFGERSVLFAADSTNISPTMYTKVAEVIGPVDTVFIGMESIGAAASWIYGPLYGEPLDRRTDQSRRLNGSNFPQAREIVDALEPDEVYVYAMGLEPWMGVVMAVDYDESHPAIVDSDLLVRHVQDKGGTAERLHLRRTLRL.

Fe cation contacts are provided by histidine 305, histidine 307, aspartate 309, histidine 310, glutamate 377, and aspartate 403.

This sequence belongs to the metallo-beta-lactamase superfamily. In terms of assembly, homodimer. Fe(2+) serves as cofactor.

The catalysed reaction is 4-amino-L-phenylalanyl-[peptidyl-carrier protein] + AH2 + O2 = (2R)-2-(4-aminophenyl)-L-seryl-[peptidyl-carrier protein] + A + H2O. The protein operates within antibiotic biosynthesis. Functionally, involved in chloramphenicol biosynthesis. Catalyzes the beta-hydroxylation of 4-amino-L-phenylalanine (L-PAPA) covalently bound to CmlP to form L-p-aminophenylserine. This is 4-amino-L-phenylalanyl-[CmlP-peptidyl-carrier-protein] 3-hydroxylase from Streptomyces venezuelae (strain ATCC 10712 / CBS 650.69 / DSM 40230 / JCM 4526 / NBRC 13096 / PD 04745).